The primary structure comprises 697 residues: SPX domain-containing membrane protein OsI_08463 (697 aa).

Residues 2 to 145 form the SPX domain; it reads VNFGKRLMAD…GYKFTDYYVS (144 aa). A run of 11 helical transmembrane segments spans residues 247-267, 278-298, 315-335, 338-356, 375-395, 411-431, 513-533, 544-564, 576-596, 604-624, and 670-690; these read FMSLLLNLANTFLYMVNTYII, LGAAATVCGVIIGSMAVAQVF, LVFSSIMLFLGNLLYALAYDV, LTVLIVGRLLCGLGSARAV, AGFVSASALGMACGPALAGLL, LPGWIMCLAWITYLFWLWISF, LLIYFMLKFAMEILLSESSVV, TVAMFLAVLGLTVLPVNVIVG, ILVASEIMVLIGIAMSFRFTS, VSSALITFVFAEVLEGVNLSL, and LLNVTLLPSFVICVASIVATF.

Belongs to the major facilitator superfamily.

The protein localises to the membrane. The polypeptide is SPX domain-containing membrane protein OsI_08463 (Oryza sativa subsp. indica (Rice)).